Reading from the N-terminus, the 71-residue chain is Sec-independent protein translocase protein TatA (71 aa).

The helical transmembrane segment at 1-21 (MGSFSLLHWLVVLVIVLLVFG) threads the bilayer. The interval 43 to 71 (LHEDDKPTDQLGSTSQSTASGPQQDHGKH) is disordered. Residues 52 to 65 (QLGSTSQSTASGPQ) show a composition bias toward polar residues.

The protein belongs to the TatA/E family. In terms of assembly, the Tat system comprises two distinct complexes: a TatABC complex, containing multiple copies of TatA, TatB and TatC subunits, and a separate TatA complex, containing only TatA subunits. Substrates initially bind to the TatABC complex, which probably triggers association of the separate TatA complex to form the active translocon.

The protein localises to the cell inner membrane. Its function is as follows. Part of the twin-arginine translocation (Tat) system that transports large folded proteins containing a characteristic twin-arginine motif in their signal peptide across membranes. TatA could form the protein-conducting channel of the Tat system. This chain is Sec-independent protein translocase protein TatA, found in Xylella fastidiosa (strain M12).